Reading from the N-terminus, the 335-residue chain is Tetraacyldisaccharide 4'-kinase (335 aa).

58 to 65 contributes to the ATP binding site; the sequence is VVGGSGKT.

This sequence belongs to the LpxK family.

The enzyme catalyses a lipid A disaccharide + ATP = a lipid IVA + ADP + H(+). It functions in the pathway glycolipid biosynthesis; lipid IV(A) biosynthesis; lipid IV(A) from (3R)-3-hydroxytetradecanoyl-[acyl-carrier-protein] and UDP-N-acetyl-alpha-D-glucosamine: step 6/6. Its function is as follows. Transfers the gamma-phosphate of ATP to the 4'-position of a tetraacyldisaccharide 1-phosphate intermediate (termed DS-1-P) to form tetraacyldisaccharide 1,4'-bis-phosphate (lipid IVA). In Hydrogenovibrio crunogenus (strain DSM 25203 / XCL-2) (Thiomicrospira crunogena), this protein is Tetraacyldisaccharide 4'-kinase.